We begin with the raw amino-acid sequence, 131 residues long: UPF0251 protein MMP0619 (131 aa).

This sequence belongs to the UPF0251 family.

This chain is UPF0251 protein MMP0619, found in Methanococcus maripaludis (strain DSM 14266 / JCM 13030 / NBRC 101832 / S2 / LL).